Consider the following 278-residue polypeptide: ATP synthase subunit a (278 aa).

6 consecutive transmembrane segments (helical) span residues 41–61, 108–128, 149–168, 180–200, 222–242, and 244–264; these read FLNI…LLFF, LTIF…VDFV, INIT…YFGI, FFFQ…LELI, LIFI…LSVP, and AIFH…LTII.

It belongs to the ATPase A chain family. As to quaternary structure, F-type ATPases have 2 components, CF(1) - the catalytic core - and CF(0) - the membrane proton channel. CF(1) has five subunits: alpha(3), beta(3), gamma(1), delta(1), epsilon(1). CF(0) has three main subunits: a(1), b(2) and c(9-12). The alpha and beta chains form an alternating ring which encloses part of the gamma chain. CF(1) is attached to CF(0) by a central stalk formed by the gamma and epsilon chains, while a peripheral stalk is formed by the delta and b chains.

The protein localises to the cell membrane. Key component of the proton channel; it plays a direct role in the translocation of protons across the membrane. The polypeptide is ATP synthase subunit a (Wigglesworthia glossinidia brevipalpis).